Reading from the N-terminus, the 342-residue chain is UDP-3-O-acylglucosamine N-acyltransferase (342 aa).

Histidine 243 functions as the Proton acceptor in the catalytic mechanism.

Belongs to the transferase hexapeptide repeat family. LpxD subfamily. Homotrimer.

It carries out the reaction a UDP-3-O-[(3R)-3-hydroxyacyl]-alpha-D-glucosamine + a (3R)-hydroxyacyl-[ACP] = a UDP-2-N,3-O-bis[(3R)-3-hydroxyacyl]-alpha-D-glucosamine + holo-[ACP] + H(+). Its pathway is bacterial outer membrane biogenesis; LPS lipid A biosynthesis. In terms of biological role, catalyzes the N-acylation of UDP-3-O-acylglucosamine using 3-hydroxyacyl-ACP as the acyl donor. Is involved in the biosynthesis of lipid A, a phosphorylated glycolipid that anchors the lipopolysaccharide to the outer membrane of the cell. The protein is UDP-3-O-acylglucosamine N-acyltransferase of Coxiella burnetii (strain CbuK_Q154) (Coxiella burnetii (strain Q154)).